We begin with the raw amino-acid sequence, 431 residues long: Lipoyl synthase 2, mitochondrial (431 aa).

A disordered region spans residues 21–43 (SPLGKLQEERGEGVAKDPKKDKQ). Residues 26–40 (LQEERGEGVAKDPKK) are compositionally biased toward basic and acidic residues. [4Fe-4S] cluster is bound by residues C127, C132, C138, C159, C163, C166, and S375. In terms of domain architecture, Radical SAM core spans 142-364 (DEEEGTATAT…EEEAMAMGFL (223 aa)).

Belongs to the radical SAM superfamily. Lipoyl synthase family. The cofactor is [4Fe-4S] cluster.

Its subcellular location is the mitochondrion. The catalysed reaction is [[Fe-S] cluster scaffold protein carrying a second [4Fe-4S](2+) cluster] + N(6)-octanoyl-L-lysyl-[protein] + 2 oxidized [2Fe-2S]-[ferredoxin] + 2 S-adenosyl-L-methionine + 4 H(+) = [[Fe-S] cluster scaffold protein] + N(6)-[(R)-dihydrolipoyl]-L-lysyl-[protein] + 4 Fe(3+) + 2 hydrogen sulfide + 2 5'-deoxyadenosine + 2 L-methionine + 2 reduced [2Fe-2S]-[ferredoxin]. It functions in the pathway protein modification; protein lipoylation via endogenous pathway; protein N(6)-(lipoyl)lysine from octanoyl-[acyl-carrier-protein]: step 2/2. Catalyzes the radical-mediated insertion of two sulfur atoms into the C-6 and C-8 positions of the octanoyl moiety bound to the lipoyl domains of lipoate-dependent enzymes, thereby converting the octanoylated domains into lipoylated derivatives. This chain is Lipoyl synthase 2, mitochondrial, found in Trypanosoma cruzi (strain CL Brener).